A 312-amino-acid chain; its full sequence is Taste receptor type 2 member 9 (312 aa).

The Extracellular portion of the chain corresponds to 1–9 (MPSAIEAIY). The chain crosses the membrane as a helical span at residues 10-32 (IILIAGELTIGIWGNGFIVLVNC). Topologically, residues 33–52 (XDWLKRRDISLIDIILISLA) are cytoplasmic. Residues 53-72 (ISRICLLCVISLDGFFMLLF) traverse the membrane as a helical segment. Residues 73-86 (PGTYGNSVLVSIVN) are Extracellular-facing. A helical transmembrane segment spans residues 87–109 (VVWTFANNSSLWFTSCLSIFYLL). Topologically, residues 110–128 (KIANISHPFFFWLKLKINK) are cytoplasmic. Residues 129–146 (VMLAILLGSFLISLIISV) traverse the membrane as a helical segment. At 147–180 (XKNDDMWYHLFKVSXEENITWEFKVSKIPGTFKQ) the chain is on the extracellular side. The N-linked (GlcNAc...) asparagine glycan is linked to Asn164. Residues 181-203 (LTLNLGGRVPFILCLISFFLLLF) form a helical membrane-spanning segment. The Cytoplasmic segment spans residues 204–234 (SLVRHTKQIQLHATGFRDPSTEAHMRAIKAV). A helical membrane pass occupies residues 235-257 (IIFLLLLIVYYPVFLVMTSSALI). At 258–261 (PQGK) the chain is on the extracellular side. The chain crosses the membrane as a helical span at residues 262–284 (LVLMIGDIVTVIFPSSHSFILIM). Residues 285-312 (GNSKLREAFLKMLRFVKGFLRRRKPFVP) are Cytoplasmic-facing.

This sequence belongs to the G-protein coupled receptor T2R family.

It is found in the membrane. Its function is as follows. Gustducin-coupled receptor implicated in the perception of bitter compounds in the oral cavity and the gastrointestinal tract. Signals through PLCB2 and the calcium-regulated cation channel TRPM5. This chain is Taste receptor type 2 member 9 (TAS2R9), found in Pan troglodytes (Chimpanzee).